Reading from the N-terminus, the 464-residue chain is Uronate isomerase (464 aa).

It belongs to the metallo-dependent hydrolases superfamily. Uronate isomerase family.

The enzyme catalyses D-glucuronate = D-fructuronate. It carries out the reaction aldehydo-D-galacturonate = keto-D-tagaturonate. It participates in carbohydrate metabolism; pentose and glucuronate interconversion. The protein is Uronate isomerase of Caldicellulosiruptor saccharolyticus (strain ATCC 43494 / DSM 8903 / Tp8T 6331).